Reading from the N-terminus, the 259-residue chain is MGKDGEGDKKRETMAVMSLMKDQQNPIQQFQVKFKEIETGFKSWLSKQKLPVEAAVVTAMGGVQGAFIGGLMGTLSPEMPQAGIDPQAMASLKQTQALVGGPLVQARNFAAITGVNAGIACVMKRIRGKEDLESAVVAAFGSGVAYSLVSAGLQGQPMNAITTAAGFAVFQGVFFKLGERFSKPSVEDPYYTRGRSMLLKLGLEKYEKNFKKGLLADPTLPLLTDSALRDVSIPPGPRLLILDHIQRDPELKGKRGSRG.

The next 4 membrane-spanning stretches (helical) occupy residues 55–75, 108–124, 135–155, and 158–178; these read AVVT…MGTL, NFAA…CVMK, AVVA…GLQG, and MNAI…FKLG.

This sequence belongs to the Tim17/Tim22/Tim23 family. Probable component of a protein-conducting channel made of HP30-1, HP30-2 and HP20 that mediates the import of transit sequence-less proteins into the chloroplastic inner membrane. Interacts with CEQORH.

The protein localises to the mitochondrion membrane. It localises to the plastid. Its subcellular location is the chloroplast inner membrane. In terms of biological role, together with HP30-1 and HP20, triggers the import and insertion of transit sequence-less multi-pass transmembrane proteins (e.g. CEQORH) into the chloroplastic inner membrane. The sequence is that of Chloroplastic import inner membrane translocase subunit HP30-2 from Arabidopsis thaliana (Mouse-ear cress).